A 423-amino-acid polypeptide reads, in one-letter code: Imidazolonepropionase (423 aa).

Fe(3+)-binding residues include His-78 and His-80. 2 residues coordinate Zn(2+): His-78 and His-80. 4-imidazolone-5-propanoate-binding residues include Arg-87, Tyr-150, and His-183. Tyr-150 contributes to the N-formimidoyl-L-glutamate binding site. Residue His-247 coordinates Fe(3+). Residue His-247 coordinates Zn(2+). Glu-250 is a 4-imidazolone-5-propanoate binding site. Asp-322 lines the Fe(3+) pocket. Asp-322 contributes to the Zn(2+) binding site. Residues Asn-324 and Gly-326 each coordinate N-formimidoyl-L-glutamate. Ser-327 serves as a coordination point for 4-imidazolone-5-propanoate.

This sequence belongs to the metallo-dependent hydrolases superfamily. HutI family. It depends on Zn(2+) as a cofactor. Fe(3+) is required as a cofactor.

The protein resides in the cytoplasm. It carries out the reaction 4-imidazolone-5-propanoate + H2O = N-formimidoyl-L-glutamate. It functions in the pathway amino-acid degradation; L-histidine degradation into L-glutamate; N-formimidoyl-L-glutamate from L-histidine: step 3/3. Its function is as follows. Catalyzes the hydrolytic cleavage of the carbon-nitrogen bond in imidazolone-5-propanoate to yield N-formimidoyl-L-glutamate. It is the third step in the universal histidine degradation pathway. This is Imidazolonepropionase from Bacillus anthracis (strain A0248).